The following is a 117-amino-acid chain: Pancreatic progenitor cell differentiation and proliferation factor A (117 aa).

The tract at residues 22–46 (GSTSSNSSCSSSEYTGEVIPHPPGL) is disordered. Low complexity predominate over residues 23–33 (STSSNSSCSSS).

This sequence belongs to the PPDPF family. Expressed exclusively in the exocrine cells during pancreas development.

Its function is as follows. Probable regulator of exocrine pancreas development. In Danio rerio (Zebrafish), this protein is Pancreatic progenitor cell differentiation and proliferation factor A (ppdpfa).